A 350-amino-acid chain; its full sequence is Probable nicotinate-nucleotide adenylyltransferase/Ap4A hydrolase (350 aa).

The naMN adenylyltransferase stretch occupies residues 1-187 (MKQKIIIFGG…YINTNHLYLI (187 aa)). Residues 196–350 (DKRFQHCLRV…LKYVQNLVKD (155 aa)) form an ap4A hydrolase region. Positions 198–310 (RFQHCLRVGK…VYLADKLEPN (113 aa)) constitute an HD domain. His201 is a binding site for ADP. Residues His201, His230, and Asp231 each coordinate Fe cation. Residues 231–234 (DLAK), His261, 287–288 (HT), Asp305, and Arg311 contribute to the ADP site. Position 305 (Asp305) interacts with Fe cation.

The protein in the N-terminal section; belongs to the NadD family. This sequence in the C-terminal section; belongs to the Ap4A hydrolase YqeK family.

It catalyses the reaction nicotinate beta-D-ribonucleotide + ATP + H(+) = deamido-NAD(+) + diphosphate. The catalysed reaction is P(1),P(4)-bis(5'-adenosyl) tetraphosphate + H2O = 2 ADP + 2 H(+). It participates in cofactor biosynthesis; NAD(+) biosynthesis; deamido-NAD(+) from nicotinate D-ribonucleotide: step 1/1. Catalyzes the reversible adenylation of nicotinate mononucleotide (NaMN) to nicotinic acid adenine dinucleotide (NaAD). Functionally, hydrolyzes diadenosine 5',5'''-P1,P4-tetraphosphate (Ap4A) to yield ADP. The chain is Probable nicotinate-nucleotide adenylyltransferase/Ap4A hydrolase from Mycoplasma genitalium (strain ATCC 33530 / DSM 19775 / NCTC 10195 / G37) (Mycoplasmoides genitalium).